The sequence spans 182 residues: Rhodanese-like domain-containing protein 15, chloroplastic (182 aa).

The N-terminal 65 residues, 1–65 (METTAFNTTS…TTSRGNVAAE (65 aa)), are a transit peptide targeting the chloroplast. The Rhodanese domain occupies 82-182 (AQAGYRYLDV…WTENELPVEE (101 aa)). Cys-142 serves as the catalytic Cysteine persulfide intermediate.

It localises to the plastid. The protein localises to the chloroplast. The protein resides in the thylakoid. The polypeptide is Rhodanese-like domain-containing protein 15, chloroplastic (STR15) (Arabidopsis thaliana (Mouse-ear cress)).